A 267-amino-acid polypeptide reads, in one-letter code: Undecaprenyl-diphosphatase (267 aa).

Transmembrane regions (helical) follow at residues 1-21 (MSYFEAFILALIQGLTEFLPI), 39-59 (QGLAFDVAVHVGTLMAVVIYF), 83-103 (AKLAWMIVIATIPACVFGLLM), 111-131 (LRSAYVIATTTIIFGLLLWWV), 144-164 (TGWKKALFIGIAQALAMIPGT), 189-209 (FLMSIPIITLAGGYLGMKLVT), 218-238 (FLLTGIVTSFISAYICIHFFL), and 246-266 (MTPFVIYRLILGFGLFAFLLM).

It belongs to the UppP family.

The protein localises to the cell inner membrane. The catalysed reaction is di-trans,octa-cis-undecaprenyl diphosphate + H2O = di-trans,octa-cis-undecaprenyl phosphate + phosphate + H(+). Its function is as follows. Catalyzes the dephosphorylation of undecaprenyl diphosphate (UPP). Confers resistance to bacitracin. The polypeptide is Undecaprenyl-diphosphatase (Vibrio campbellii (strain ATCC BAA-1116)).